The sequence spans 237 residues: Ribose-5-phosphate isomerase A (237 aa).

Residues 33–36 (TGST), 90–93 (DGAD), and 103–106 (KGGG) each bind substrate. The active-site Proton acceptor is E112. K130 contributes to the substrate binding site.

Belongs to the ribose 5-phosphate isomerase family. As to quaternary structure, homodimer.

It carries out the reaction aldehydo-D-ribose 5-phosphate = D-ribulose 5-phosphate. Its pathway is carbohydrate degradation; pentose phosphate pathway; D-ribose 5-phosphate from D-ribulose 5-phosphate (non-oxidative stage): step 1/1. Functionally, catalyzes the reversible conversion of ribose-5-phosphate to ribulose 5-phosphate. The polypeptide is Ribose-5-phosphate isomerase A (Trichodesmium erythraeum (strain IMS101)).